The primary structure comprises 337 residues: CMP-N-acetylneuraminate-beta-galactosamide-alpha-2,3-sialyltransferase 1 (337 aa).

The Cytoplasmic portion of the chain corresponds to methionine 1–lysine 4. A helical; Signal-anchor for type II membrane protein transmembrane segment spans residues threonine 5 to tyrosine 25. Topologically, residues serine 26–arginine 337 are lumenal. Cystine bridges form between cysteine 56–cysteine 61, cysteine 58–cysteine 136, and cysteine 139–cysteine 278. Residue asparagine 76 is glycosylated (N-linked (GlcNAc...) asparagine). Glutamine 102 contributes to the substrate binding site. Asparagine 109 carries an N-linked (GlcNAc...) asparagine glycan. Residues asparagine 144, asparagine 167, tyrosine 227, tyrosine 263, glycine 267, glycine 287, histidine 296, and histidine 313 each coordinate substrate. An N-linked (GlcNAc...) asparagine glycan is attached at asparagine 320.

This sequence belongs to the glycosyltransferase 29 family. The soluble form derives from the membrane form by proteolytic processing. As to expression, highly expressed in submaxillary gland and to a much lesser extent in liver, lung, kidney, heart and brain.

It is found in the golgi apparatus. It localises to the golgi stack membrane. The protein localises to the trans-Golgi network membrane. Its subcellular location is the secreted. It carries out the reaction a beta-D-galactosyl-(1-&gt;3)-N-acetyl-alpha-D-galactosaminyl derivative + CMP-N-acetyl-beta-neuraminate = an N-acetyl-alpha-neuraminyl-(2-&gt;3)-beta-D-galactosyl-(1-&gt;3)-N-acetyl-alpha-D-galactosaminyl derivative + CMP + H(+). It catalyses the reaction a ganglioside GM1 (d18:1(4E)) + CMP-N-acetyl-beta-neuraminate = a ganglioside GD1a (d18:1(4E)) + CMP + H(+). The catalysed reaction is ganglioside GM1 (d18:1(4E)/18:0) + CMP-N-acetyl-beta-neuraminate = ganglioside GD1a (18:1(4E)/18:0) + CMP + H(+). The enzyme catalyses a ganglioside GA1 + CMP-N-acetyl-beta-neuraminate = a ganglioside GM1b + CMP + H(+). It carries out the reaction a ganglioside GA1 (d18:1(4E)) + CMP-N-acetyl-beta-neuraminate = a ganglioside GM1b (d18:1(4E)) + CMP + H(+). It catalyses the reaction a ganglioside GD1b + CMP-N-acetyl-beta-neuraminate = a ganglioside GT1b + CMP + H(+). The catalysed reaction is a 3-O-[beta-D-galactosyl-(1-&gt;3)-N-acetyl-alpha-D-galactosaminyl]-L-threonyl-[protein] + CMP-N-acetyl-beta-neuraminate = a 3-O-[N-acetyl-alpha-neuraminyl-(2-&gt;3)-beta-D-galactosyl-(1-&gt;3)-N-acetyl-alpha-D-galactosaminyl]-L-threonyl-[protein] + CMP + H(+). The enzyme catalyses a 3-O-[beta-D-galactosyl-(1-&gt;3)-N-acetyl-alpha-D-galactosaminyl]-L-seryl-[protein] + CMP-N-acetyl-beta-neuraminate = 3-O-[N-acetyl-alpha-neuraminyl-(2-&gt;3)-beta-D-galactosyl-(1-&gt;3)-N-acetyl-alpha-D-galactosaminyl]-L-seryl-[protein] + CMP + H(+). It functions in the pathway protein modification; protein glycosylation. The protein operates within glycolipid biosynthesis. In terms of biological role, a beta-galactoside alpha2-&gt;3 sialyltransferase involved in terminal sialylation of glycoproteins and glycolipids. Catalyzes the transfer of sialic acid (N-acetyl-neuraminic acid; Neu5Ac) from the nucleotide sugar donor CMP-Neu5Ac onto acceptor Galbeta-(1-&gt;3)-GalNAc-terminated glycoconjugates through an alpha2-3 linkage. Adds sialic acid to the core 1 O-glycan, Galbeta-(1-&gt;3)-GalNAc-O-Ser/Thr, which is a major structure of mucin-type O-glycans. As part of a homeostatic mechanism that regulates CD8-positive T cell numbers, sialylates core 1 O-glycans of T cell glycoproteins, SPN/CD43 and PTPRC/CD45. Prevents premature apoptosis of thymic CD8-positive T cells prior to peripheral emigration, whereas in the secondary lymphoid organs controls the survival of CD8-positive memory T cells generated following a successful immune response. Transfers sialic acid to asialofetuin, presumably onto Galbeta-(1-&gt;3)-GalNAc-O-Ser. Sialylates GM1a, GA1 and GD1b gangliosides to form GD1a, GM1b and GT1b, respectively. The polypeptide is CMP-N-acetylneuraminate-beta-galactosamide-alpha-2,3-sialyltransferase 1 (St3gal1) (Mus musculus (Mouse)).